The primary structure comprises 209 residues: Large ribosomal subunit protein uL3 (209 aa).

Glutamine 150 is subject to N5-methylglutamine.

The protein belongs to the universal ribosomal protein uL3 family. In terms of assembly, part of the 50S ribosomal subunit. Forms a cluster with proteins L14 and L19. In terms of processing, methylated by PrmB.

Functionally, one of the primary rRNA binding proteins, it binds directly near the 3'-end of the 23S rRNA, where it nucleates assembly of the 50S subunit. This chain is Large ribosomal subunit protein uL3, found in Cronobacter sakazakii (strain ATCC BAA-894) (Enterobacter sakazakii).